The chain runs to 99 residues: Aspartyl/glutamyl-tRNA(Asn/Gln) amidotransferase subunit C (99 aa).

This sequence belongs to the GatC family. Heterotrimer of A, B and C subunits.

It catalyses the reaction L-glutamyl-tRNA(Gln) + L-glutamine + ATP + H2O = L-glutaminyl-tRNA(Gln) + L-glutamate + ADP + phosphate + H(+). The catalysed reaction is L-aspartyl-tRNA(Asn) + L-glutamine + ATP + H2O = L-asparaginyl-tRNA(Asn) + L-glutamate + ADP + phosphate + 2 H(+). In terms of biological role, allows the formation of correctly charged Asn-tRNA(Asn) or Gln-tRNA(Gln) through the transamidation of misacylated Asp-tRNA(Asn) or Glu-tRNA(Gln) in organisms which lack either or both of asparaginyl-tRNA or glutaminyl-tRNA synthetases. The reaction takes place in the presence of glutamine and ATP through an activated phospho-Asp-tRNA(Asn) or phospho-Glu-tRNA(Gln). This chain is Aspartyl/glutamyl-tRNA(Asn/Gln) amidotransferase subunit C, found in Burkholderia thailandensis (strain ATCC 700388 / DSM 13276 / CCUG 48851 / CIP 106301 / E264).